Here is a 153-residue protein sequence, read N- to C-terminus: Pheromone-binding protein Gp-9 (153 aa).

Residues 1–19 (MKTFVLHIFIFALVAFASA) form the signal peptide. 3 disulfide bridges follow: Cys37–Cys77, Cys73–Cys129, and Cys118–Cys138.

The protein belongs to the PBP/GOBP family. In terms of assembly, homodimer.

The protein localises to the secreted. In terms of biological role, colony queen number, a major feature of social organization, is associated with worker genotype for Gp-9. Colonies are headed by either a single reproductive queen (monogyne form) or multiple queens (polygyne form). Differences in worker Gp-9 genotypes between social forms may cause differences in workers' abilities to recognize queens and regulate their numbers. The sequence is that of Pheromone-binding protein Gp-9 from Solenopsis substituta (Fire ant).